Consider the following 62-residue polypeptide: Alpha-lytic protease L1 (62 aa).

S48 (charge relay system) is an active-site residue.

Belongs to the peptidase S1 family. As to quaternary structure, monomer.

Its subcellular location is the secreted. It catalyses the reaction Preferential cleavage: Ala-|-Xaa, Val-|-Xaa in bacterial cell walls, elastin and other proteins.. Inhibited by phenylmethanesulfonyl fluoride (PMSF) and p-chloromercuribenzoate (PCMB). Its function is as follows. Has bacteriolytic activity. In Lysobacter sp. (strain XL1), this protein is Alpha-lytic protease L1.